Here is an 853-residue protein sequence, read N- to C-terminus: DNA mismatch repair protein MutS (853 aa).

ATP is bound at residue 614–621; it reads GPNMGGKS.

The protein belongs to the DNA mismatch repair MutS family.

This protein is involved in the repair of mismatches in DNA. It is possible that it carries out the mismatch recognition step. This protein has a weak ATPase activity. The chain is DNA mismatch repair protein MutS from Escherichia coli (strain 55989 / EAEC).